The following is a 163-amino-acid chain: Periplasmic nitrate reductase, electron transfer subunit (163 aa).

The signal sequence occupies residues 1-32 (MRSQDPSRRLSRRLWTLFALALCLVTGTVALA). Heme c contacts are provided by His76, Cys90, Cys93, His94, His111, Cys130, Cys133, and His134.

This sequence belongs to the NapB family. Component of the periplasmic nitrate reductase NapAB complex composed of NapA and NapB. In terms of processing, binds 2 heme C groups per subunit.

It is found in the periplasm. Functionally, electron transfer subunit of the periplasmic nitrate reductase complex NapAB. Receives electrons from the membrane-anchored tetraheme c-type NapC protein and transfers these to NapA subunit, thus allowing electron flow between membrane and periplasm. Essential for periplasmic nitrate reduction with nitrate as the terminal electron acceptor. The sequence is that of Periplasmic nitrate reductase, electron transfer subunit from Neorhizobium galegae (Rhizobium galegae).